Reading from the N-terminus, the 388-residue chain is MHLSALLTLLPAVLAAPATIGRRAEPAPLFTPQAESIIADKYIVKFKDDIARIATDDTVSALTSKADFVYEHAFHGFAGSLTKEELKMLREHPGVDFIEKDAVMRISGITEQSGAPWGLGRISHRSKGSTTYRYDDSAGQGTCVYIIDTGIEASHPEFEGRATFLKSFISGQNTDGHGHGTHCAGTIGSKTYGVAKKAKLYGVKVLDNQGSGSYSGIISGMDYVAQDSKTRGCPNGAIASMSLGGGYSASVNQGAAALVNSGVFLAVAAGNDNRDAQNTSPASEPSACTVGASAENDSRSSFSNYGRVVDIFAPGSNVLSTWIVGRTNSISGTSMATPHIAGLAAYLSALQGKTTPAALCKKIQDTATKNVLTGVPSGTVNYLAYNGA.

An N-terminal signal peptide occupies residues 1–18 (MHLSALLTLLPAVLAAPA). Positions 19 to 107 (TIGRRAEPAP…IEKDAVMRIS (89 aa)) are excised as a propeptide. Residues 41–106 (KYIVKFKDDI…FIEKDAVMRI (66 aa)) enclose the Inhibitor I9 domain. One can recognise a Peptidase S8 domain in the interval 116-388 (PWGLGRISHR…TVNYLAYNGA (273 aa)). Cystine bridges form between C143–C233 and C288–C360. Active-site charge relay system residues include D148 and H179. The N-linked (GlcNAc...) asparagine glycan is linked to N296. S334 (charge relay system) is an active-site residue.

Belongs to the peptidase S8 family.

It localises to the secreted. Capable of breaching the insect cuticle. The chain is Cuticle-degrading protease (PR1) from Metarhizium anisopliae (Entomophthora anisopliae).